Here is a 238-residue protein sequence, read N- to C-terminus: Uridylate kinase (238 aa).

12–15 (KVSG) serves as a coordination point for ATP. Residue Gly54 coordinates UMP. Residues Gly55 and Arg59 each contribute to the ATP site. UMP contacts are provided by residues Asp74 and 135 to 142 (TGNPYFTT). 4 residues coordinate ATP: Thr162, Asn163, Tyr168, and Asp171.

It belongs to the UMP kinase family. In terms of assembly, homohexamer.

It is found in the cytoplasm. It catalyses the reaction UMP + ATP = UDP + ADP. It participates in pyrimidine metabolism; CTP biosynthesis via de novo pathway; UDP from UMP (UMPK route): step 1/1. Inhibited by UTP. Its function is as follows. Catalyzes the reversible phosphorylation of UMP to UDP. The protein is Uridylate kinase of Azorhizobium caulinodans (strain ATCC 43989 / DSM 5975 / JCM 20966 / LMG 6465 / NBRC 14845 / NCIMB 13405 / ORS 571).